The sequence spans 66 residues: Large ribosomal subunit protein bL31 (66 aa).

Zn(2+) is bound by residues Cys16, Cys18, Cys36, and Cys39.

Belongs to the bacterial ribosomal protein bL31 family. Type A subfamily. Part of the 50S ribosomal subunit. Zn(2+) is required as a cofactor.

In terms of biological role, binds the 23S rRNA. This chain is Large ribosomal subunit protein bL31, found in Leptospira biflexa serovar Patoc (strain Patoc 1 / Ames).